The primary structure comprises 61 residues: Large ribosomal subunit protein bL32 (61 aa).

Basic residues predominate over residues 1 to 16 (MAVPKRKTSPSKRGMR). Residues 1-40 (MAVPKRKTSPSKRGMRRSADALKAPTYIEDKNSGELRRPH) form a disordered region. The segment covering 28 to 40 (IEDKNSGELRRPH) has biased composition (basic and acidic residues).

It belongs to the bacterial ribosomal protein bL32 family.

The protein is Large ribosomal subunit protein bL32 of Sinorhizobium medicae (strain WSM419) (Ensifer medicae).